Reading from the N-terminus, the 271-residue chain is Protein PXR1 (271 aa).

Residues 25–72 (TSRFGHQFLEKFGWKPGMGLGLSPMNSNTSHIKVSIKDDNVGLGAKLK) form the G-patch domain. The tract at residues 147 to 239 (SNAKKRKREG…SASNIPDAVN (93 aa)) is disordered. Over residues 157–168 (DDSEDEDDDDKE) the composition is skewed to acidic residues. Over residues 175–203 (KKHKKHKKHKKDKKKDKKDKKEHKKHKKE) the composition is skewed to basic residues. The span at 204–221 (EKRLKKEKRAEKTKETKK) shows a compositional bias: basic and acidic residues. S230 is modified (phosphoserine).

It belongs to the PINX1 family. In terms of assembly, interacts with EST2.

The protein resides in the nucleus. The protein localises to the nucleolus. Functionally, involved in rRNA-processing at A0, A1 and A2 sites through its action in U18 and U24 snoRNA 3'-end final trimming. Negative regulator of telomerase through competition for binding to EST2 with TLC1. The chain is Protein PXR1 (PXR1) from Saccharomyces cerevisiae (strain ATCC 204508 / S288c) (Baker's yeast).